The following is a 195-amino-acid chain: Protein GrpE (195 aa).

The span at 1-20 (MSSKEQKTPDEQVLDQKEAA) shows a compositional bias: basic and acidic residues. The segment at 1 to 40 (MSSKEQKTPDEQVLDQKEAAKGQQADAAPETADVADPRDE) is disordered.

This sequence belongs to the GrpE family. In terms of assembly, homodimer.

The protein resides in the cytoplasm. Functionally, participates actively in the response to hyperosmotic and heat shock by preventing the aggregation of stress-denatured proteins, in association with DnaK and GrpE. It is the nucleotide exchange factor for DnaK and may function as a thermosensor. Unfolded proteins bind initially to DnaJ; upon interaction with the DnaJ-bound protein, DnaK hydrolyzes its bound ATP, resulting in the formation of a stable complex. GrpE releases ADP from DnaK; ATP binding to DnaK triggers the release of the substrate protein, thus completing the reaction cycle. Several rounds of ATP-dependent interactions between DnaJ, DnaK and GrpE are required for fully efficient folding. This Pectobacterium atrosepticum (strain SCRI 1043 / ATCC BAA-672) (Erwinia carotovora subsp. atroseptica) protein is Protein GrpE.